Here is a 319-residue protein sequence, read N- to C-terminus: 4-hydroxy-3-methylbut-2-enyl diphosphate reductase (319 aa).

Cys-15 is a binding site for [4Fe-4S] cluster. His-44 and His-77 together coordinate (2E)-4-hydroxy-3-methylbut-2-enyl diphosphate. The dimethylallyl diphosphate site is built by His-44 and His-77. Residues His-44 and His-77 each coordinate isopentenyl diphosphate. [4Fe-4S] cluster is bound at residue Cys-99. His-127 contributes to the (2E)-4-hydroxy-3-methylbut-2-enyl diphosphate binding site. His-127 is a dimethylallyl diphosphate binding site. His-127 serves as a coordination point for isopentenyl diphosphate. Glu-129 (proton donor) is an active-site residue. Thr-167 contributes to the (2E)-4-hydroxy-3-methylbut-2-enyl diphosphate binding site. Cys-197 is a binding site for [4Fe-4S] cluster. (2E)-4-hydroxy-3-methylbut-2-enyl diphosphate is bound by residues Ser-225, Ser-226, Asn-227, and Ser-269. Positions 225, 226, 227, and 269 each coordinate dimethylallyl diphosphate. Isopentenyl diphosphate contacts are provided by Ser-225, Ser-226, Asn-227, and Ser-269.

This sequence belongs to the IspH family. [4Fe-4S] cluster serves as cofactor.

The enzyme catalyses isopentenyl diphosphate + 2 oxidized [2Fe-2S]-[ferredoxin] + H2O = (2E)-4-hydroxy-3-methylbut-2-enyl diphosphate + 2 reduced [2Fe-2S]-[ferredoxin] + 2 H(+). The catalysed reaction is dimethylallyl diphosphate + 2 oxidized [2Fe-2S]-[ferredoxin] + H2O = (2E)-4-hydroxy-3-methylbut-2-enyl diphosphate + 2 reduced [2Fe-2S]-[ferredoxin] + 2 H(+). It participates in isoprenoid biosynthesis; dimethylallyl diphosphate biosynthesis; dimethylallyl diphosphate from (2E)-4-hydroxy-3-methylbutenyl diphosphate: step 1/1. Its pathway is isoprenoid biosynthesis; isopentenyl diphosphate biosynthesis via DXP pathway; isopentenyl diphosphate from 1-deoxy-D-xylulose 5-phosphate: step 6/6. In terms of biological role, catalyzes the conversion of 1-hydroxy-2-methyl-2-(E)-butenyl 4-diphosphate (HMBPP) into a mixture of isopentenyl diphosphate (IPP) and dimethylallyl diphosphate (DMAPP). Acts in the terminal step of the DOXP/MEP pathway for isoprenoid precursor biosynthesis. The chain is 4-hydroxy-3-methylbut-2-enyl diphosphate reductase from Rhodopirellula baltica (strain DSM 10527 / NCIMB 13988 / SH1).